Consider the following 244-residue polypeptide: 1-(5-phosphoribosyl)-5-[(5-phosphoribosylamino)methylideneamino] imidazole-4-carboxamide isomerase (244 aa).

The Proton acceptor role is filled by aspartate 11. Aspartate 132 serves as the catalytic Proton donor.

Belongs to the HisA/HisF family.

The protein localises to the cytoplasm. The catalysed reaction is 1-(5-phospho-beta-D-ribosyl)-5-[(5-phospho-beta-D-ribosylamino)methylideneamino]imidazole-4-carboxamide = 5-[(5-phospho-1-deoxy-D-ribulos-1-ylimino)methylamino]-1-(5-phospho-beta-D-ribosyl)imidazole-4-carboxamide. Its pathway is amino-acid biosynthesis; L-histidine biosynthesis; L-histidine from 5-phospho-alpha-D-ribose 1-diphosphate: step 4/9. In Sphingopyxis alaskensis (strain DSM 13593 / LMG 18877 / RB2256) (Sphingomonas alaskensis), this protein is 1-(5-phosphoribosyl)-5-[(5-phosphoribosylamino)methylideneamino] imidazole-4-carboxamide isomerase.